The chain runs to 336 residues: MTHKVATDFEDGVTRFIDANTGETVADAAYRQGINLPLDCRDGACGACKCFAESGRYSLGEEYIEDALSEAEAEQGYVLTCQMRAESDCVIRVPAASDVCKTQQAGYQAAISNVRQLSESTIALSIKSASLNQLAFLPGQYVNLQVPGSDQTRAYSFSSLQKDGEVSFLIRKLPGGLMSSFLTSLAKVGDSVSLAGPLGAFYLREIKRPLLLLAGGTGLAPFTAMLEKIAEQGGEHPLHLIYGVTHDHDLVEMDKLEAFAARIPNFSYSACVASPDSAYPQKGYVTQYIEPKQLNGGEVDIYLCGPPPMVEAVSQYIRAQGIQPANFYYEKFAASA.

The 2Fe-2S ferredoxin-type domain occupies 3–97 (HKVATDFEDG…DCVIRVPAAS (95 aa)). Residues Cys-40, Cys-45, Cys-48, and Cys-81 each contribute to the [2Fe-2S] cluster site. The interval 99 to 336 (VCKTQQAGYQ…FYYEKFAASA (238 aa)) is ferredoxin-reductase. Residues 104 to 204 (QAGYQAAISN…AGPLGAFYLR (101 aa)) form the FAD-binding FR-type domain.

The protein belongs to the bacterial ring-hydroxylating dioxygenase ferredoxin reductase family. This dioxygenase system consists of three proteins: the two subunits of the hydroxylase component (XylX and XylY), and an electron transfer component (XylZ). Requires FAD as cofactor. [2Fe-2S] cluster is required as a cofactor.

The catalysed reaction is 2 reduced [2Fe-2S]-[ferredoxin] + NAD(+) + H(+) = 2 oxidized [2Fe-2S]-[ferredoxin] + NADH. Its function is as follows. Electron transfer component of toluate 1,2-dioxygenase system. This is Toluate 1,2-dioxygenase electron transfer component (xylZ) from Pseudomonas putida (Arthrobacter siderocapsulatus).